The sequence spans 224 residues: Adenylate kinase (224 aa).

10–15 (GSGKST) contributes to the ATP binding site. The tract at residues 30-59 (SSGDMIRAEIEKGSELGKELKKYLAKGELI) is NMP. AMP contacts are provided by residues serine 31, arginine 36, 57 to 59 (ELI), 83 to 86 (GYPR), and glutamine 90. The tract at residues 124-161 (GRRICPKCGAVYHLRYRPPKVPGKCDLCGSQLIQREDD) is LID. Arginine 125 serves as a coordination point for ATP. Zn(2+)-binding residues include cysteine 128 and cysteine 131. 134 to 135 (VY) contributes to the ATP binding site. Residues cysteine 148 and cysteine 151 each coordinate Zn(2+). Residues arginine 158 and arginine 169 each coordinate AMP. Glycine 197 contributes to the ATP binding site.

It belongs to the adenylate kinase family. In terms of assembly, monomer.

The protein resides in the cytoplasm. It carries out the reaction AMP + ATP = 2 ADP. The protein operates within purine metabolism; AMP biosynthesis via salvage pathway; AMP from ADP: step 1/1. Its function is as follows. Catalyzes the reversible transfer of the terminal phosphate group between ATP and AMP. Plays an important role in cellular energy homeostasis and in adenine nucleotide metabolism. This is Adenylate kinase from Thermococcus onnurineus (strain NA1).